Consider the following 294-residue polypeptide: Proteasome subunit beta (294 aa).

A propeptide spans 1–65 (removed in mature form; by autocatalysis); that stretch reads MTADRPALRT…MESGDLAPHG (65 aa). Residue Thr-66 is the Nucleophile of the active site.

Belongs to the peptidase T1B family. As to quaternary structure, the 20S proteasome core is composed of 14 alpha and 14 beta subunits that assemble into four stacked heptameric rings, resulting in a barrel-shaped structure. The two inner rings, each composed of seven catalytic beta subunits, are sandwiched by two outer rings, each composed of seven alpha subunits. The catalytic chamber with the active sites is on the inside of the barrel. Has a gated structure, the ends of the cylinder being occluded by the N-termini of the alpha-subunits. Is capped by the proteasome-associated ATPase, ARC.

It localises to the cytoplasm. The catalysed reaction is Cleavage of peptide bonds with very broad specificity.. The protein operates within protein degradation; proteasomal Pup-dependent pathway. The formation of the proteasomal ATPase ARC-20S proteasome complex, likely via the docking of the C-termini of ARC into the intersubunit pockets in the alpha-rings, may trigger opening of the gate for substrate entry. Interconversion between the open-gate and close-gate conformations leads to a dynamic regulation of the 20S proteasome proteolysis activity. Its function is as follows. Component of the proteasome core, a large protease complex with broad specificity involved in protein degradation. The chain is Proteasome subunit beta from Rhodococcus jostii (strain RHA1).